We begin with the raw amino-acid sequence, 311 residues long: Lipoyl synthase (311 aa).

Positions 36, 41, 47, 66, 70, 73, and 280 each coordinate [4Fe-4S] cluster. One can recognise a Radical SAM core domain in the interval 51–269; the sequence is RDGPGTATFM…RVAESEFGFL (219 aa).

This sequence belongs to the radical SAM superfamily. Lipoyl synthase family. The cofactor is [4Fe-4S] cluster.

Its subcellular location is the cytoplasm. The enzyme catalyses [[Fe-S] cluster scaffold protein carrying a second [4Fe-4S](2+) cluster] + N(6)-octanoyl-L-lysyl-[protein] + 2 oxidized [2Fe-2S]-[ferredoxin] + 2 S-adenosyl-L-methionine + 4 H(+) = [[Fe-S] cluster scaffold protein] + N(6)-[(R)-dihydrolipoyl]-L-lysyl-[protein] + 4 Fe(3+) + 2 hydrogen sulfide + 2 5'-deoxyadenosine + 2 L-methionine + 2 reduced [2Fe-2S]-[ferredoxin]. The protein operates within protein modification; protein lipoylation via endogenous pathway; protein N(6)-(lipoyl)lysine from octanoyl-[acyl-carrier-protein]: step 2/2. In terms of biological role, catalyzes the radical-mediated insertion of two sulfur atoms into the C-6 and C-8 positions of the octanoyl moiety bound to the lipoyl domains of lipoate-dependent enzymes, thereby converting the octanoylated domains into lipoylated derivatives. This Halobacterium salinarum (strain ATCC 29341 / DSM 671 / R1) protein is Lipoyl synthase.